Reading from the N-terminus, the 463-residue chain is Siroheme synthase (463 aa).

The precorrin-2 dehydrogenase /sirohydrochlorin ferrochelatase stretch occupies residues 1 to 203 (MDYLPLFHKL…GQGAEAERLL (203 aa)). Residues 22 to 23 (EI) and 43 to 44 (PD) contribute to the NAD(+) site. Phosphoserine is present on Ser-128. The uroporphyrinogen-III C-methyltransferase stretch occupies residues 216 to 463 (GEVYLVGAGP…LAWFEGSQNS (248 aa)). Pro-225 provides a ligand contact to S-adenosyl-L-methionine. The Proton acceptor role is filled by Asp-248. The Proton donor role is filled by Lys-270. Residues 301–303 (GGD), Ile-306, 331–332 (TA), Met-383, and Gly-412 contribute to the S-adenosyl-L-methionine site.

In the N-terminal section; belongs to the precorrin-2 dehydrogenase / sirohydrochlorin ferrochelatase family. This sequence in the C-terminal section; belongs to the precorrin methyltransferase family.

The enzyme catalyses uroporphyrinogen III + 2 S-adenosyl-L-methionine = precorrin-2 + 2 S-adenosyl-L-homocysteine + H(+). It catalyses the reaction precorrin-2 + NAD(+) = sirohydrochlorin + NADH + 2 H(+). The catalysed reaction is siroheme + 2 H(+) = sirohydrochlorin + Fe(2+). Its pathway is cofactor biosynthesis; adenosylcobalamin biosynthesis; precorrin-2 from uroporphyrinogen III: step 1/1. It participates in cofactor biosynthesis; adenosylcobalamin biosynthesis; sirohydrochlorin from precorrin-2: step 1/1. It functions in the pathway porphyrin-containing compound metabolism; siroheme biosynthesis; precorrin-2 from uroporphyrinogen III: step 1/1. The protein operates within porphyrin-containing compound metabolism; siroheme biosynthesis; siroheme from sirohydrochlorin: step 1/1. Its pathway is porphyrin-containing compound metabolism; siroheme biosynthesis; sirohydrochlorin from precorrin-2: step 1/1. Its function is as follows. Multifunctional enzyme that catalyzes the SAM-dependent methylations of uroporphyrinogen III at position C-2 and C-7 to form precorrin-2 via precorrin-1. Then it catalyzes the NAD-dependent ring dehydrogenation of precorrin-2 to yield sirohydrochlorin. Finally, it catalyzes the ferrochelation of sirohydrochlorin to yield siroheme. The polypeptide is Siroheme synthase (Pseudomonas putida (strain ATCC 700007 / DSM 6899 / JCM 31910 / BCRC 17059 / LMG 24140 / F1)).